The sequence spans 681 residues: Cadmium, zinc and cobalt-transporting ATPase (681 aa).

In terms of domain architecture, HMA spans 1–66 (MQKYHFTGLD…LEPDMELSEQ (66 aa)). At 1 to 72 (MQKYHFTGLD…LSEQVQSEAK (72 aa)) the chain is on the cytoplasmic side. The Cd(2+) site is built by Cys11 and Cys14. 2 residues coordinate Co(2+): Cys11 and Cys14. The Zn(2+) site is built by Cys11 and Cys14. The chain crosses the membrane as a helical span at residues 73 to 92 (PSAIPLLLSVVLYLIAVATI). Over 93 to 102 (HFSAQNWALH) the chain is Extracellular. Residues 103 to 124 (LSYALLAGVYLVAGKDVFLGAL) traverse the membrane as a helical segment. Topologically, residues 125-131 (RAIRNKQ) are cytoplasmic. Residues 132–151 (FFDENTLMLSATIAAFGVGA) form a helical membrane-spanning segment. Topologically, residues 152–154 (HEE) are extracellular. The chain crosses the membrane as a helical span at residues 155–174 (AVSIMVFYSAGEFLQQLAIA). Topologically, residues 175–308 (RSKQSLHALL…ITTFARYYTP (134 aa)) are cytoplasmic. Residues 309-327 (AVFAIALLIALVPPLLGHG) traverse the membrane as a helical segment. Residues 328–332 (DFDTW) are Extracellular-facing. Residues 333–350 (IYRGLFALMVSCPCALVI) traverse the membrane as a helical segment. At 351–630 (SVPLGYFGGV…VFKIAKKTKR (280 aa)) the chain is on the cytoplasmic side. The 4-aspartylphosphate intermediate role is filled by Asp388. Mg(2+) contacts are provided by Asp578 and Asp582. The helical transmembrane segment at 631-652 (IIIENIIFALAIKAMFIVLGLS) threads the bilayer. Topologically, residues 653-660 (GDASLWEA) are extracellular. The helical transmembrane segment at 661–676 (VLGDVGVTLIALANSM) threads the bilayer. The Cytoplasmic segment spans residues 677–681 (RTMRI).

The protein belongs to the cation transport ATPase (P-type) (TC 3.A.3) family. Type IB subfamily.

Its subcellular location is the cell membrane. It catalyses the reaction Zn(2+)(in) + ATP + H2O = Zn(2+)(out) + ADP + phosphate + H(+). The enzyme catalyses Cd(2+)(in) + ATP + H2O = Cd(2+)(out) + ADP + phosphate + H(+). Functionally, couples the hydrolysis of ATP with the transport of cadmium, zinc and cobalt out of the cell. This is Cadmium, zinc and cobalt-transporting ATPase (cadA) from Helicobacter felis.